Here is a 23-residue protein sequence, read N- to C-terminus: Acidic phospholipase CHA-E6a (23 aa).

The protein belongs to the phospholipase A2 family. Group II subfamily. D49 sub-subfamily. Ca(2+) serves as cofactor. Contains 7 disulfide bonds. Expressed by the venom gland.

The protein localises to the secreted. It catalyses the reaction a 1,2-diacyl-sn-glycero-3-phosphocholine + H2O = a 1-acyl-sn-glycero-3-phosphocholine + a fatty acid + H(+). Its function is as follows. Snake venom phospholipase A2 (PLA2) that shows high lipolytic (1048 umol/mg/min) and weak ADP-induced platelet aggregation activities. Also shows weak anticoagulant activity (IC(50) is less than 1.0 uM). PLA2 catalyzes the calcium-dependent hydrolysis of the 2-acyl groups in 3-sn-phosphoglycerides. The chain is Acidic phospholipase CHA-E6a from Crotalus horridus (Timber rattlesnake).